The chain runs to 232 residues: Peroxiredoxin (232 aa).

The Thioredoxin domain occupies 6 to 161 (PSIGEKFPEI…ILRLIESLQI (156 aa)). Cysteine 48 serves as the catalytic Cysteine sulfenic acid (-SOH) intermediate. Substrate is bound at residue arginine 124. Cysteines 203 and 209 form a disulfide.

The protein belongs to the peroxiredoxin family. Prx6 subfamily. As to quaternary structure, homodecamer. Pentamer of dimers that assemble into a ring structure.

The protein localises to the cytoplasm. It catalyses the reaction a hydroperoxide + [thioredoxin]-dithiol = an alcohol + [thioredoxin]-disulfide + H2O. Functionally, thiol-specific peroxidase that catalyzes the reduction of hydrogen peroxide and organic hydroperoxides to water and alcohols, respectively. Plays a role in cell protection against oxidative stress by detoxifying peroxides. The polypeptide is Peroxiredoxin (Hyperthermus butylicus (strain DSM 5456 / JCM 9403 / PLM1-5)).